Consider the following 324-residue polypeptide: Geranylgeranyl pyrophosphate synthase dpmpD (324 aa).

Positions 50, 53, and 82 each coordinate isopentenyl diphosphate. Residues Asp89 and Asp93 each coordinate Mg(2+). Dimethylallyl diphosphate is bound at residue Arg98. Residue Arg99 participates in isopentenyl diphosphate binding. Lys176, Thr177, and Gln210 together coordinate dimethylallyl diphosphate. Residue Asp213 participates in Mg(2+) binding. The dimethylallyl diphosphate site is built by Asn217, Lys227, and Lys237.

It belongs to the FPP/GGPP synthase family. Mg(2+) serves as cofactor.

It catalyses the reaction isopentenyl diphosphate + dimethylallyl diphosphate = (2E)-geranyl diphosphate + diphosphate. The catalysed reaction is isopentenyl diphosphate + (2E)-geranyl diphosphate = (2E,6E)-farnesyl diphosphate + diphosphate. The enzyme catalyses isopentenyl diphosphate + (2E,6E)-farnesyl diphosphate = (2E,6E,10E)-geranylgeranyl diphosphate + diphosphate. Its pathway is secondary metabolite biosynthesis; terpenoid biosynthesis. Its function is as follows. Geranylgeranyl pyrophosphate synthase; part of the gene cluster that mediates the biosynthesis of diterpenoid pyrones. The first step of the pathway is the synthesis of the alpha-pyrone moiety by the polyketide synthase dpmpA via condensation of one acetyl-CoA starter unit with 3 malonyl-CoA units and 2 methylations. The alpha-pyrone is then combined with geranylgeranyl pyrophosphate (GGPP) formed by the GGPP synthase dpmpD through the action of the prenyltransferase dpmpC to yield a linear alpha-pyrone diterpenoid. Subsequent steps in the diterpenoid pyrone biosynthetic pathway involve the decalin core formation, which is initiated by the epoxidation of the C10-C11 olefin by the FAD-dependent oxidoreductase dpmpE, and is followed by a cyclization cascade catalyzed by the terpene cyclase dpmpB. The short chain dehydrogenase/reductase dpmpG then oxidizes the 8S hydroxy group to a ketone and the short chain dehydrogenase/reductase dpmpH reduces the ketone to the 8R hydroxy group to yield higginsianin B. Higginsianin B is further methylated by the methyltransferase dpmpI to produce the intermediate named FDDP B. The cytochrome P450 monooxygenase dpmpJ then oxidizes the C-26 methyl to primary alcohol, producing the final diterpenoid pyrone with a C-26 primary alcohol on the gamma-pyrone moiety named FDDP C. In Macrophomina phaseolina (strain MS6) (Charcoal rot fungus), this protein is Geranylgeranyl pyrophosphate synthase dpmpD.